The sequence spans 547 residues: GID complex substrate-recognition subunit 10 (547 aa).

Composition is skewed to polar residues over residues Met1–Glu11 and Gly28–Gln41. Disordered regions lie at residues Met1 to Arg42, Glu60 to Thr115, Arg169 to Ser217, and Pro285 to Asn313. Over residues Ser99–Gly108 the composition is skewed to basic residues. The segment covering Arg169 to Gln185 has biased composition (polar residues). Low complexity-rich tracts occupy residues Pro186–Pro199, Ser207–Ser217, and Ser298–Ser307.

Belongs to the GID4/VID24 family. In terms of assembly, substrate-recognition component of the GID/CTLH complex. In the absence of stress, the complex exists as an inactive anticipatory complex (GID(Ant)), composed of Gid1, the E3 ubiquitin-ligase Gid2, Gid5, Gid8, and the RING-like subunit Gid9, awaiting a substrate receptor to form the active E3 ligase complex. When cells are shifted to glucose-containing medium, the substrate receptor Gid4 is induced and becomes part of the complex, named GID(SR4). Additionally, Gid7 transforms the GID(SR4) E3 ligase core into a higher-order supramolecular assembly (Chelator-GID(SR4)). Under osmotic or heat stress, the substrate receptor Gid10 is induced and becomes part of the complex, named GID(SR10). Interacts with proteins that have an N-terminal Pro/N-degron.

The protein localises to the nucleus. Its function is as follows. Substrate-recognition component of the GID E3 ligase complex recruiting N termini and catalyzing ubiquitination of proteins targeted for degradation. GID E3 is regulated through assembly with interchangeable N-degron-binding substrate receptors induced by distinct environmental perturbations. Required for the adaptation to osmotic or heat stress. Specific for substrates with an N-terminal Pro (Pro/N-degron). This Schizosaccharomyces pombe (strain 972 / ATCC 24843) (Fission yeast) protein is GID complex substrate-recognition subunit 10 (gid10).